We begin with the raw amino-acid sequence, 198 residues long: Recombination protein RecR (198 aa).

The C4-type zinc-finger motif lies at 57-72 (CSVCGHITDQDPCYIC). In terms of domain architecture, Toprim spans 80-175 (SVICVVQDPK…KLSRIAHGLP (96 aa)).

The protein belongs to the RecR family.

May play a role in DNA repair. It seems to be involved in an RecBC-independent recombinational process of DNA repair. It may act with RecF and RecO. This is Recombination protein RecR from Bacillus licheniformis (strain ATCC 14580 / DSM 13 / JCM 2505 / CCUG 7422 / NBRC 12200 / NCIMB 9375 / NCTC 10341 / NRRL NRS-1264 / Gibson 46).